The primary structure comprises 128 residues: Dehydrin Xero 1 (128 aa).

The segment covering 1–19 has biased composition (polar residues); the sequence is MESYQNQSGAQQTHQQLDQ. The segment at 1-128 is disordered; sequence MESYQNQSGA…IKEKLPGGHH (128 aa). Composition is skewed to low complexity over residues 23-41 and 48-60; these read PFPATTGAYGTAGGAPAVA and GMLHRSGSSSSSS. The span at 75–91 shows a compositional bias: basic and acidic residues; the sequence is GITEKIKEKLPGHHDSN. Over residues 92–104 the composition is skewed to polar residues; it reads KTSSLGSTTTAYD. A compositionally biased stretch (basic and acidic residues) spans 107-128; that stretch reads TVHHEKKGMMEKIKEKLPGGHH.

Belongs to the plant dehydrin family.

This chain is Dehydrin Xero 1 (XERO1), found in Arabidopsis thaliana (Mouse-ear cress).